The primary structure comprises 1496 residues: MTDTNELFEDQTTALQNSAPIAPLANPQHTVSRGKFRSLTLINWNGFFARTFDLDELVTTLSGGNGAGKSTTMAGFVTALIPDLTLLNFRNTTEAGSTSSSRDKGLYGKLKAGVCYAVLESLNSRGQRVITGVRLQQVAGRDKKVDIRSFSLQNVPMSDSIISVLTEQVGEKARVLPLADLKDKFDGSEVVFKQYHSITDYHSFMFDLGVIPKRLRSSADRSKFYKLIEASLYGGISSVITKSLRDYLLPENTGVRQAFQDMESALRENRMTLEAIKVTQSDRDMFKRLITESTNYVSADYMRNANERRGNVQIALEQRRAWYESKSKLELEQQRLIEFSREVADISENESSLEAEYNSANDHLNLVMNALRHQEKIERYQDEVAELNEKLEEQQIALEEVSEQVETAQARADDADDQVEELRSQMADYQQALDAQQTRALQYQQAIAALEKAKQLCGLPHLDLHNVEDYHAEFAAQADDLTDQVFELEQRLSVSDMAKTQFEKAYELVCKISGEIDRSEAWDEARSLLTAFTDQKMQATQAVALRQKLADLEQRLHQQQNAERLLAEFNQKAQTQFETAEELEGYFEQQQARLEDVEAELAEFVEVRSTQRQQREQLNQQYNQLAKTAPAWHTAQSALARLEEQCGEKFEASQSVMQFMQNMLTKEREATLARDKLARREAALDAQITRLSQPDGSDDVRLNQLAERFGGVLLSELYDDVSIDDAPYFSALYGEARHAIVVRDLESVKSQLEKLDDCPTDLYLIEGDPSAFDDAVFTAEELAEGVVVKVSDRQWRYSKFPEVPLFGRAAREKHLETLKAERDEVSEQHAERAFDVQKCQRLHQHLSQFVGTHLSLAFQPNPEEQMQEIAAERTEIERELNQAAGNEQQLRSQLDSAKAKLQMLNKILPLVSLLEDETLADRAEECRAQLDEAEEDEQFVRQFGNYLTQLEPIAASLKSDPAKFEQLEQDYRQAKAEQKQVQQKVFALSDVIQRRVHFSYEEAIGSEGSALTEQLRTRLENAQREREQARDQLRQAQAQFTQYNQVLTGLRSSCDAKTQMLQELIREIDDLGVRGDIGAEERARSRRDELQQRLSQQRSRKGYLDKQLGTIEAEIDNLTRTLRKAERDYHTQRELVVQAKVSWCLVLKLSRNSDVEKRLNRRELAYQSAEELRSISDKALGALRTAVADNEYLRDSLRASEDSRKPENKVAFFIAVYQHLRERIRQDIIKTDDPIDAIEQMEIELSRLTNELTSREKKLAISAESVANILRKTIQREQNRILQLNQGLQNIAFGQVKGVRLVVNIRDTHAILLNALSNGREEHKDLFDSQKLSFSEALAMLYKRVNPHIEMGQRTPQTIGEELLDYRNYLDLEVETFRGADGWMRAESSALSTGEAIGTGMSILLMVVQSWEEESRRMRAKDILPSRLLFLDEAARLDATSINTLFELCERLDMQLLIAAPENISPERGTTYKLVRKITNNQEYVHVVGLKGFGQQ.

Gly-63–Ser-70 serves as a coordination point for ATP. Coiled-coil stretches lie at residues Lys-328 to Ser-493 and Lys-536 to Trp-632. The tract at residues Pro-694–Arg-811 is flexible hinge. 2 coiled-coil regions span residues Asn-861–Glu-1171 and Ile-1235–Ile-1291. Positions Arg-1082–Gln-1091 are enriched in basic and acidic residues. A disordered region spans residues Arg-1082–Lys-1101.

This sequence belongs to the SMC family. MukB subfamily. Homodimerization via its hinge domain. Binds to DNA via its C-terminal region. Interacts, and probably forms a ternary complex, with MukE and MukF via its C-terminal region. The complex formation is stimulated by calcium or magnesium. Interacts with tubulin-related protein FtsZ.

The protein localises to the cytoplasm. Its subcellular location is the nucleoid. In terms of biological role, plays a central role in chromosome condensation, segregation and cell cycle progression. Functions as a homodimer, which is essential for chromosome partition. Involved in negative DNA supercoiling in vivo, and by this means organize and compact chromosomes. May achieve or facilitate chromosome segregation by condensation DNA from both sides of a centrally located replisome during cell division. This is Chromosome partition protein MukB from Actinobacillus pleuropneumoniae serotype 3 (strain JL03).